An 89-amino-acid chain; its full sequence is Long neurotoxin homolog Pa ID (89 aa).

The first 21 residues, 1–21 (MKTLLLTLVVVTIMCLDLGYT), serve as a signal peptide directing secretion. 5 disulfide bridges follow: Cys24-Cys42, Cys35-Cys63, Cys48-Cys52, Cys67-Cys78, and Cys79-Cys84.

This sequence belongs to the three-finger toxin family. Long-chain subfamily. Type II alpha-neurotoxin sub-subfamily. In terms of tissue distribution, expressed by the venom gland.

Its subcellular location is the secreted. Functionally, binds with high affinity to muscular (alpha-1/CHRNA1) and neuronal (alpha-7/CHRNA7) nicotinic acetylcholine receptor (nAChR) and inhibits acetylcholine from binding to the receptor, thereby impairing neuromuscular and neuronal transmission. The polypeptide is Long neurotoxin homolog Pa ID (Pseudechis australis (Mulga snake)).